The chain runs to 109 residues: Aquaporin-2 (109 aa).

The Cytoplasmic segment spans residues 1–6; sequence SIAFSR. The chain crosses the membrane as a helical span at residues 7 to 27; it reads AVFTEFLATLLFVFFGLGSAL. The Extracellular portion of the chain corresponds to 28–35; it reads NWPQALPS. The chain crosses the membrane as a helical span at residues 36-54; that stretch reads VLQIAMAFGLAIGTLVQML. Residues 55–59 lie on the Cytoplasmic side of the membrane; sequence GHISG. An intramembrane region (discontinuously helical) is located at residues 60–69; sequence AHINPAVTVA. The NPA 1 motif lies at 63-65; the sequence is NPA. At 70-80 the chain is on the cytoplasmic side; that stretch reads CLVGCHISFLR. The chain crosses the membrane as a helical span at residues 81-102; that stretch reads AAFYVAAQLLGAVAGAALLHEV. Topologically, residues 103–109 are extracellular; sequence TPPSIRG.

Belongs to the MIP/aquaporin (TC 1.A.8) family. Homotetramer. In terms of processing, serine phosphorylation is necessary and sufficient for expression at the apical membrane. Endocytosis is not phosphorylation-dependent. Post-translationally, N-glycosylated.

It is found in the apical cell membrane. The protein resides in the basolateral cell membrane. Its subcellular location is the cell membrane. The protein localises to the cytoplasmic vesicle membrane. It localises to the golgi apparatus. It is found in the trans-Golgi network membrane. The enzyme catalyses H2O(in) = H2O(out). The catalysed reaction is glycerol(in) = glycerol(out). Functionally, forms a water-specific channel that provides the plasma membranes of renal collecting duct with high permeability to water, thereby permitting water to move in the direction of an osmotic gradient. Plays an essential role in renal water homeostasis. Could also be permeable to glycerol. This is Aquaporin-2 from Erinaceus europaeus (Western European hedgehog).